The primary structure comprises 318 residues: NADH-ubiquinone oxidoreductase chain 1 (318 aa).

The next 8 membrane-spanning stretches (helical) occupy residues 3–23 (TTNI…LTLV), 69–89 (FMFT…WIPL), 100–120 (LGIL…LWSG), 135–155 (AVAQ…SLVL), 171–191 (HMWL…STLA), 213–233 (VEYA…NIIL), 253–273 (ELHT…FLWI), and 294–314 (LPLT…FASI).

The protein belongs to the complex I subunit 1 family.

The protein resides in the mitochondrion inner membrane. It catalyses the reaction a ubiquinone + NADH + 5 H(+)(in) = a ubiquinol + NAD(+) + 4 H(+)(out). Its function is as follows. Core subunit of the mitochondrial membrane respiratory chain NADH dehydrogenase (Complex I) that is believed to belong to the minimal assembly required for catalysis. Complex I functions in the transfer of electrons from NADH to the respiratory chain. The immediate electron acceptor for the enzyme is believed to be ubiquinone. The protein is NADH-ubiquinone oxidoreductase chain 1 (MT-ND1) of Choloepus didactylus (Southern two-toed sloth).